Reading from the N-terminus, the 1052-residue chain is ATP-dependent DNA helicase MPH1 (1052 aa).

Positions 89 to 256 constitute a Helicase ATP-binding domain; it reads IVRKGLLQNI…EVVNNLNISK (168 aa). Residue 102 to 109 participates in ATP binding; sequence IPTGMGKT. The DEAH box motif lies at 204-207; sequence DEAH. The 218-residue stretch at 432 to 649 folds into the Helicase C-terminal domain; it reads ELTQFFYENP…HLVQYRKSDR (218 aa). Disordered stretches follow at residues 495–550, 798–832, 869–898, and 1002–1052; these read HGPK…NQKQ, IGDT…DLPL, SKRQ…QPEV, and HTVS…DSDF. Residues 503–532 are compositionally biased toward basic and acidic residues; the sequence is SDREKRLEEERRMDEEKKQAALQEKLERTS. Polar residues predominate over residues 534 to 549; sequence RTGSSEEAQLSGMNQK. 2 stretches are compositionally biased toward low complexity: residues 875-898 and 1005-1028; these read QPEV…QPEV and SQSQ…QQAS. The segment covering 1029–1040 has biased composition (basic and acidic residues); that stretch reads QKDRSSQDKDLT. Over residues 1043–1052 the composition is skewed to acidic residues; sequence ELEDLLDSDF.

Belongs to the DEAD box helicase family. DEAH subfamily. FANCM sub-subfamily. Interacts with the MHF histone-fold complex to form the FANCM-MHF complex.

The protein resides in the nucleus. It carries out the reaction ATP + H2O = ADP + phosphate + H(+). Functionally, ATP-dependent DNA helicase involved in DNA damage repair by homologous recombination and in genome maintenance. Capable of unwinding D-loops. Plays a role in limiting crossover recombinants during mitotic DNA double-strand break (DSB) repair. Component of a FANCM-MHF complex which promotes gene conversion at blocked replication forks, probably by reversal of the stalled fork. In Candida glabrata (strain ATCC 2001 / BCRC 20586 / JCM 3761 / NBRC 0622 / NRRL Y-65 / CBS 138) (Yeast), this protein is ATP-dependent DNA helicase MPH1.